The primary structure comprises 371 residues: MKAPSWRRAVLKVGSALIAPDETGVSTKYLLPIARFINECRERGQEVVLVSSGSVAAGRKHFNFEHKKVPVAVRKAMSAVGQNEMMGYWSRFFDSPCAQLLMTHSDLRDRARYVSIKNTLNRLLEHDILPVVNENDALATDEMKVGDNDNLSAMIATLVDADALFICSDIDGLYDSDPNLNPDAKKIPVVEQIDESIYSLAGGSVSSVGTGGMRTKVEAAEKATSHGIDTYIVNGRKGETFESLLQGDIPGTLFRRQSDPISNKKHWLRHTLVAQGEILVDEGAEKALIENGASLLSSGIVDVQGDFDRGDAVLVRSANDTDAIAKGICQYSAHELMHIKGQQTEDIAEKFGYSPITEVIHRDDLMILEDS.

Lys12 is an ATP binding site. Ser52, Asp136, and Asn148 together coordinate substrate. Residues 168 to 169 (SD) and 210 to 216 (TGGMRTK) contribute to the ATP site. Residues 275–354 (QGEILVDEGA…EDIAEKFGYS (80 aa)) enclose the PUA domain.

This sequence belongs to the glutamate 5-kinase family.

It is found in the cytoplasm. It catalyses the reaction L-glutamate + ATP = L-glutamyl 5-phosphate + ADP. The protein operates within amino-acid biosynthesis; L-proline biosynthesis; L-glutamate 5-semialdehyde from L-glutamate: step 1/2. Catalyzes the transfer of a phosphate group to glutamate to form L-glutamate 5-phosphate. The polypeptide is Glutamate 5-kinase (Idiomarina loihiensis (strain ATCC BAA-735 / DSM 15497 / L2-TR)).